The chain runs to 249 residues: MKLNISFPATGCQKLIEVDDERKLRTFYEKRMATEVAADALGEEWKGYVVRISGGNDKQGFPMKQGVLTHGRVRLLLSKGHSCYRPRRTGERKRKSVRGCIVDANLSVLNLVIVKKGEKDIPGLTDTTVPRRLGPKRASRIRKLFNLSKEDDVRQYVVRKPLNKEGKKPRTKAPKIQRLVTPRVLQHKRRRIALKKQRTKKNKEEAAEYAKLLAKRMKEAKEKRQEQIAKRRRLSSLRASTSKSESSQK.

A Glycyl lysine isopeptide (Lys-Gly) (interchain with G-Cter in SUMO2) cross-link involves residue K14. E35 carries the ADP-ribosyl glutamic acid modification. The residue at position 137 (R137) is a (3R)-3-hydroxyarginine. S148 bears the Phosphoserine mark. K211 carries the N6-acetyllysine modification. The segment covering 217-229 has biased composition (basic and acidic residues); that stretch reads MKEAKEKRQEQIA. Residues 217–249 form a disordered region; the sequence is MKEAKEKRQEQIAKRRRLSSLRASTSKSESSQK. Residues S235, S236, S240, S242, S244, and S247 each carry the phosphoserine modification. A compositionally biased stretch (low complexity) spans 236-249; that stretch reads SLRASTSKSESSQK.

Belongs to the eukaryotic ribosomal protein eS6 family. Component of the small ribosomal subunit. Part of the small subunit (SSU) processome, composed of more than 70 proteins and the RNA chaperone small nucleolar RNA (snoRNA) U3. Ribosomal protein S6 is the major substrate of protein kinases in eukaryote ribosomes. The phosphorylation is stimulated by growth factors, tumor promoting agents, and mitogens. It is dephosphorylated at growth arrest. Phosphorylated at Ser-235 and Ser-236 by RPS6KA1 and RPS6KA3; phosphorylation at these sites facilitates the assembly of the pre-initiation complex. Post-translationally, specifically hydroxylated (with R stereochemistry) at C-3 of Arg-137 by KDM8. In terms of processing, mono-ADP-ribosylation at Glu-35 by PARP16 inhibits polysome assembly and mRNA loading, thereby inhibiting protein translation.

The protein resides in the cytoplasm. Its subcellular location is the nucleus. It localises to the nucleolus. Functionally, component of the 40S small ribosomal subunit. Plays an important role in controlling cell growth and proliferation through the selective translation of particular classes of mRNA. Part of the small subunit (SSU) processome, first precursor of the small eukaryotic ribosomal subunit. During the assembly of the SSU processome in the nucleolus, many ribosome biogenesis factors, an RNA chaperone and ribosomal proteins associate with the nascent pre-rRNA and work in concert to generate RNA folding, modifications, rearrangements and cleavage as well as targeted degradation of pre-ribosomal RNA by the RNA exosome. The sequence is that of Small ribosomal subunit protein eS6 (RPS6) from Oryctolagus cuniculus (Rabbit).